The following is a 392-amino-acid chain: Protein O-glucosyltransferase 1 (392 aa).

Positions 1 to 23 (MERRAGSRLRAWMLLLLLCPVQG) are cleaved as a signal peptide. Intrachain disulfides connect Cys49/Cys56, Cys54/Cys357, Cys102/Cys108, and Cys263/Cys286. An N-linked (GlcNAc...) asparagine glycan is attached at Asn53. The segment at 103-107 (MFPSR) is interaction with the consensus sequence C-X-S-X-[PA]-C in peptide substrates. Asp133 serves as the catalytic Proton donor/acceptor. The segment at 172–178 (AVWPLYP) is interaction with the consensus sequence C-X-S-X-[PA]-C in peptide substrates. Tyr177 provides a ligand contact to UDP-alpha-D-glucose. Residue Asn204 is glycosylated (N-linked (GlcNAc...) asparagine). Residues Ser212, Arg218, and 274 to 279 (VAASFR) contribute to the UDP-alpha-D-glucose site. Asn373 carries an N-linked (GlcNAc...) asparagine glycan. A Prevents secretion from ER motif is present at residues 389-392 (KTEL).

It belongs to the glycosyltransferase 90 family. As to expression, widely expressed in newborn and adult tissues (at protein level).

It is found in the endoplasmic reticulum lumen. The enzyme catalyses L-seryl-[EGF-like domain protein] + UDP-alpha-D-xylose = 3-O-(beta-D-xylosyl)-L-seryl-[EGF-like domain protein] + UDP + H(+). It carries out the reaction L-seryl-[EGF-like domain protein] + UDP-alpha-D-glucose = 3-O-(beta-D-glucosyl)-L-seryl-[EGF-like domain protein] + UDP + H(+). It functions in the pathway protein modification; protein glycosylation. Its function is as follows. Dual specificity glycosyltransferase that catalyzes the transfer of glucose and xylose from UDP-glucose and UDP-xylose, respectively, to a serine residue found in the consensus sequence of C-X-S-X-P-C. Specifically targets extracellular EGF repeats of protein such as CRB2, F7, F9 and NOTCH2. Acts as a positive regulator of Notch signaling by mediating O-glucosylation of Notch, leading to regulate muscle development. Notch glucosylation does not affect Notch ligand binding. Required during early development to promote gastrulation: acts by mediating O-glucosylation of CRB2, which is required for CRB2 localization to the cell membrane. The polypeptide is Protein O-glucosyltransferase 1 (Mus musculus (Mouse)).